The chain runs to 304 residues: L-lactate dehydrogenase (304 aa).

NAD(+) contacts are provided by residues V11, D32, R37, and 76-77 (GA). Substrate contacts are provided by residues Q79, R85, and 117–120 (NPVD). NAD(+) is bound at residue S138. 143–146 (DSAR) lines the substrate pocket. Beta-D-fructose 1,6-bisphosphate-binding residues include R148 and H163. H170 functions as the Proton acceptor in the catalytic mechanism. Substrate is bound at residue T225.

Belongs to the LDH/MDH superfamily. LDH family. In terms of assembly, homotetramer.

The protein resides in the cytoplasm. The catalysed reaction is (S)-lactate + NAD(+) = pyruvate + NADH + H(+). The protein operates within fermentation; pyruvate fermentation to lactate; (S)-lactate from pyruvate: step 1/1. Allosterically activated by fructose 1,6-bisphosphate (FBP). Catalyzes the conversion of lactate to pyruvate. The sequence is that of L-lactate dehydrogenase from Deinococcus radiodurans (strain ATCC 13939 / DSM 20539 / JCM 16871 / CCUG 27074 / LMG 4051 / NBRC 15346 / NCIMB 9279 / VKM B-1422 / R1).